A 970-amino-acid chain; its full sequence is Testis anion transporter 1 (970 aa).

Over methionine 1–aspartate 95 the chain is Cytoplasmic. The helical transmembrane segment at leucine 96–leucine 116 threads the bilayer. Residues alanine 117–glutamine 119 lie on the Extracellular side of the membrane. The helical transmembrane segment at leucine 120 to phenylalanine 140 threads the bilayer. Residues glycine 141–methionine 146 are Cytoplasmic-facing. Residues serine 147–phenylalanine 167 form a helical membrane-spanning segment. The Extracellular segment spans residues asparagine 168–threonine 202. The N-linked (GlcNAc...) asparagine glycan is linked to asparagine 192. The helical transmembrane segment at phenylalanine 203–tyrosine 223 threads the bilayer. The Cytoplasmic portion of the chain corresponds to leucine 224–tyrosine 232. A helical transmembrane segment spans residues leucine 233–isoleucine 253. Residues serine 254–cysteine 270 lie on the Extracellular side of the membrane. Residues valine 271–leucine 291 form a helical membrane-spanning segment. Residues arginine 292 to glutamate 307 lie on the Cytoplasmic side of the membrane. Residues phenylalanine 308 to alanine 328 form a helical membrane-spanning segment. The Extracellular segment spans residues threonine 329–proline 355. The helical transmembrane segment at lysine 356–glycine 376 threads the bilayer. Over lysine 377–aspartate 392 the chain is Cytoplasmic. A helical membrane pass occupies residues leucine 393–glycine 413. Topologically, residues alanine 414–glutamine 429 are extracellular. A helical transmembrane segment spans residues phenylalanine 430 to phenylalanine 450. The Cytoplasmic portion of the chain corresponds to tyrosine 451–threonine 452. A helical membrane pass occupies residues leucine 453–isoleucine 473. Over serine 474–serine 497 the chain is Extracellular. The chain crosses the membrane as a helical span at residues isoleucine 498–threonine 518. Residues valine 519–valine 970 lie on the Cytoplasmic side of the membrane. The 253-residue stretch at aspartate 543 to alanine 795 folds into the STAS domain. The interval threonine 664–valine 970 is interaction with RACGAP1. Positions serine 858–glutamine 868 are enriched in acidic residues. The segment at serine 858–valine 970 is disordered. A compositionally biased stretch (basic and acidic residues) spans aspartate 877–threonine 898. Residues serine 938 to tryptophan 948 are compositionally biased toward low complexity.

This sequence belongs to the SLC26A/SulP transporter (TC 2.A.53) family. As to quaternary structure, interacts with RACGAP1. Interacts with CFTR; stimulates anion transport activity of CFTR. Post-translationally, N-glycosylated. As to expression, expression observed exclusively in testis, restricted to the meiotic phase of the germ cell. Abundant expression located in the seminiferous tubules, concentrated on the luminal side of the tubuli harboring the spermatocytes and spermatids.

It localises to the membrane. The catalysed reaction is sulfate(out) + chloride(in) = sulfate(in) + chloride(out). The enzyme catalyses oxalate(in) + chloride(out) = oxalate(out) + chloride(in). Its activity is regulated as follows. Activity is inhibited by 4,4'-Di-isothiocyanatostilbene-2,2'-disulfonic acid (DIDS - an inhibitor of several anion channels and transporters) and gluconate. In terms of biological role, antiporter that mediates the exchange of sulfate and oxalate against chloride ions across a membrane. Stimulates anion transport activity of CFTR. May cooperate with CFTR in the regulation of chloride and bicarbonate ions fluxes required for activation of the ADCY10/PKA pathway during sperm motility and sperm capacitation. May play a role in sperm tail differentiation and motility and hence male fertility. The sequence is that of Testis anion transporter 1 from Homo sapiens (Human).